Consider the following 616-residue polypeptide: MSPNDAFISAPAKIETPVGPRNEGQPAWNKQRGSSMPVNRYMPFEVEVEDISLPDRTWPDKKITVAPQWCAVDLRDGNQALIDPMSPERKRRMFELLVQMGFKEIEVGFPSASQTDFDFVREIIEKDMIPDDVTIQVLVQAREHLIRRTFEACEGAKNVIVHFYNSTSILQRNVVFRMDKDQVKKLATDAAELIKTIAQDYPDTNWRWQYSPESFTGTEVEYAKEVVDAVVEVMDPTPENPMIINLPSTVEMITPNVYADSIEWMHRNVNRRDSIILSLHPHNDRGTGVGAAELGYMAGADRIEGCLFGNGERTGNVCLVTLALNMLTQGVDPQLDFTDIRQIRSTVEYCNQLRVPERHPYAGDLVFTAFSGSHQDAVNKGLDAMAAKVKPGANSTDVSWEELRDTEWEVPYLPIDPKDVGRDYEAVIRVNSQSGKGGVAYIMKTDHGLQIPRSMQVEFSAVVQNVTDAEGGEVNSKAMWDIFATEYLERTAPVEQIALRVENAQTENEDASITAELIHNGKDVTVDGHGNGPLAAYANALEKLGIDVEIQEYNQHARTSGDDAEAAAYVLAEVNGRKVWGVGIAGSITYASLKAVTSAVNRALDVNHEAVLAGGV.

Residues M1 to S34 are disordered. Residues P67–R341 enclose the Pyruvate carboxyltransferase domain. D76, H280, H282, and N316 together coordinate Mg(2+). Residues R490–V616 are regulatory domain.

This sequence belongs to the alpha-IPM synthase/homocitrate synthase family. LeuA type 2 subfamily. Homodimer. Requires Mg(2+) as cofactor.

The protein resides in the cytoplasm. The catalysed reaction is 3-methyl-2-oxobutanoate + acetyl-CoA + H2O = (2S)-2-isopropylmalate + CoA + H(+). It participates in amino-acid biosynthesis; L-leucine biosynthesis; L-leucine from 3-methyl-2-oxobutanoate: step 1/4. Functionally, catalyzes the condensation of the acetyl group of acetyl-CoA with 3-methyl-2-oxobutanoate (2-ketoisovalerate) to form 3-carboxy-3-hydroxy-4-methylpentanoate (2-isopropylmalate). The chain is 2-isopropylmalate synthase from Corynebacterium glutamicum (strain R).